The following is a 436-amino-acid chain: Glutamyl-tRNA reductase (436 aa).

Residues 56–59 (TCNR), Ser114, 119–121 (EAQ), and Gln125 each bind substrate. Cys57 serves as the catalytic Nucleophile. 194–199 (GAGEMI) lines the NADP(+) pocket.

It belongs to the glutamyl-tRNA reductase family. As to quaternary structure, homodimer.

It carries out the reaction (S)-4-amino-5-oxopentanoate + tRNA(Glu) + NADP(+) = L-glutamyl-tRNA(Glu) + NADPH + H(+). It functions in the pathway porphyrin-containing compound metabolism; protoporphyrin-IX biosynthesis; 5-aminolevulinate from L-glutamyl-tRNA(Glu): step 1/2. In terms of biological role, catalyzes the NADPH-dependent reduction of glutamyl-tRNA(Glu) to glutamate 1-semialdehyde (GSA). This Acidovorax sp. (strain JS42) protein is Glutamyl-tRNA reductase.